Reading from the N-terminus, the 305-residue chain is Homoserine O-acetyltransferase (305 aa).

Cys132 functions as the Acyl-thioester intermediate in the catalytic mechanism. Substrate is bound by residues Lys153 and Ser181. His221 serves as the catalytic Proton acceptor. Residue Glu223 is part of the active site. Position 235 (Arg235) interacts with substrate.

The protein belongs to the MetA family.

It localises to the cytoplasm. The enzyme catalyses L-homoserine + acetyl-CoA = O-acetyl-L-homoserine + CoA. The protein operates within amino-acid biosynthesis; L-methionine biosynthesis via de novo pathway; O-acetyl-L-homoserine from L-homoserine: step 1/1. In terms of biological role, transfers an acetyl group from acetyl-CoA to L-homoserine, forming acetyl-L-homoserine. This is Homoserine O-acetyltransferase from Leuconostoc mesenteroides subsp. mesenteroides (strain ATCC 8293 / DSM 20343 / BCRC 11652 / CCM 1803 / JCM 6124 / NCDO 523 / NBRC 100496 / NCIMB 8023 / NCTC 12954 / NRRL B-1118 / 37Y).